The chain runs to 204 residues: Holliday junction branch migration complex subunit RuvA (204 aa).

Residues methionine 1–methionine 64 form a domain I region. Residues threonine 65–glycine 143 form a domain II region. Residues leucine 144 to glycine 151 are flexible linker. The domain III stretch occupies residues valine 152 to arginine 204.

It belongs to the RuvA family. Homotetramer. Forms an RuvA(8)-RuvB(12)-Holliday junction (HJ) complex. HJ DNA is sandwiched between 2 RuvA tetramers; dsDNA enters through RuvA and exits via RuvB. An RuvB hexamer assembles on each DNA strand where it exits the tetramer. Each RuvB hexamer is contacted by two RuvA subunits (via domain III) on 2 adjacent RuvB subunits; this complex drives branch migration. In the full resolvosome a probable DNA-RuvA(4)-RuvB(12)-RuvC(2) complex forms which resolves the HJ.

It is found in the cytoplasm. In terms of biological role, the RuvA-RuvB-RuvC complex processes Holliday junction (HJ) DNA during genetic recombination and DNA repair, while the RuvA-RuvB complex plays an important role in the rescue of blocked DNA replication forks via replication fork reversal (RFR). RuvA specifically binds to HJ cruciform DNA, conferring on it an open structure. The RuvB hexamer acts as an ATP-dependent pump, pulling dsDNA into and through the RuvAB complex. HJ branch migration allows RuvC to scan DNA until it finds its consensus sequence, where it cleaves and resolves the cruciform DNA. The sequence is that of Holliday junction branch migration complex subunit RuvA from Rhizobium johnstonii (strain DSM 114642 / LMG 32736 / 3841) (Rhizobium leguminosarum bv. viciae).